The sequence spans 418 residues: UDP-glucuronic acid decarboxylase 1 (418 aa).

Topologically, residues 1 to 17 (MMRMSWMVTVINRRMMK) are cytoplasmic. A helical; Signal-anchor for type II membrane protein transmembrane segment spans residues 18–38 (ILIALALIAYIASVWGTYANM). Topologically, residues 39–418 (RSIQEHGEMK…RMKKGRPRHN (380 aa)) are lumenal. NAD(+)-binding residues include Gly96, Phe97, Val98, Asp117, Asn118, Phe120, Thr121, Gly122, Asp142, and Val143. Positions 147 and 148 each coordinate UDP-alpha-D-glucuronate. NAD(+) contacts are provided by Leu157 and Ser159. A UDP-alpha-D-glucuronate-binding site is contributed by Lys175. An NAD(+)-binding site is contributed by Thr176. UDP-alpha-D-glucuronate-binding residues include Asn183, Gly186, Lys189, and Arg190. Residues Ala198, Tyr229, and Lys233 each coordinate NAD(+). Tyr229 (proton acceptor) is an active-site residue. UDP-alpha-D-glucuronate contacts are provided by Tyr243, Gln246, and Glu247. Thr259, His265, and Arg270 together coordinate NAD(+). 2 N-linked (GlcNAc...) asparagine glycosylation sites follow: Asn314 and Asn383. The disordered stretch occupies residues 397–418 (ANNQYIPKPKAARMKKGRPRHN). The segment covering 406-418 (KAARMKKGRPRHN) has biased composition (basic residues).

It belongs to the NAD(P)-dependent epimerase/dehydratase family. UDP-glucuronic acid decarboxylase subfamily. In terms of assembly, homodimer and homotetramer. Requires NAD(+) as cofactor.

It is found in the golgi apparatus. It localises to the golgi stack membrane. The enzyme catalyses UDP-alpha-D-glucuronate + H(+) = UDP-alpha-D-xylose + CO2. The protein operates within nucleotide-sugar biosynthesis; UDP-alpha-D-xylose biosynthesis; UDP-alpha-D-xylose from UDP-alpha-D-glucuronate: step 1/1. Catalyzes the NAD-dependent decarboxylation of UDP-glucuronic acid to UDP-xylose. Necessary for the biosynthesis of the core tetrasaccharide in glycosaminoglycan biosynthesis. Essential during embryogenesis for craniofacial development. The chain is UDP-glucuronic acid decarboxylase 1 from Danio rerio (Zebrafish).